The primary structure comprises 132 residues: Large-conductance mechanosensitive channel (132 aa).

Helical transmembrane passes span 14–34, 38–58, and 67–87; these read VVDL…VSSL, IITP…LHFG, and GNFI…FMFI.

It belongs to the MscL family. As to quaternary structure, homopentamer.

The protein localises to the cell membrane. In terms of biological role, channel that opens in response to stretch forces in the membrane lipid bilayer. May participate in the regulation of osmotic pressure changes within the cell. The polypeptide is Large-conductance mechanosensitive channel (Bacillus cereus (strain G9842)).